A 184-amino-acid polypeptide reads, in one-letter code: Ras-related protein RabN2 (184 aa).

A GTP-binding site is contributed by Gly-3–Thr-10. Residues Thr-25 to Tyr-32 carry the Effector region motif. Residues Asp-50–His-54 and Thr-117–Asp-120 contribute to the GTP site.

The protein belongs to the small GTPase superfamily. Rab family.

The protein is Ras-related protein RabN2 (rabN2) of Dictyostelium discoideum (Social amoeba).